Consider the following 109-residue polypeptide: Large ribosomal subunit protein uL22 (109 aa).

The protein belongs to the universal ribosomal protein uL22 family. In terms of assembly, part of the 50S ribosomal subunit.

Functionally, this protein binds specifically to 23S rRNA; its binding is stimulated by other ribosomal proteins, e.g. L4, L17, and L20. It is important during the early stages of 50S assembly. It makes multiple contacts with different domains of the 23S rRNA in the assembled 50S subunit and ribosome. Its function is as follows. The globular domain of the protein is located near the polypeptide exit tunnel on the outside of the subunit, while an extended beta-hairpin is found that lines the wall of the exit tunnel in the center of the 70S ribosome. The protein is Large ribosomal subunit protein uL22 of Polaromonas naphthalenivorans (strain CJ2).